Consider the following 1931-residue polypeptide: Chitin synthase 5 (1931 aa).

The Myosin motor domain occupies 11-777; sequence LGVTDLSSLA…LFRFLEDRLR (767 aa). 122 to 129 lines the ATP pocket; it reads GPTGSGKS. Asn-510, Asn-538, and Asn-676 each carry an N-linked (GlcNAc...) asparagine glycan. Residues 655–677 are actin-binding; it reads VDSLLKSFDQTQTWYIFALRPND. The disordered stretch occupies residues 798 to 817; sequence DPFSPHRYQPTSFDSQDHVY. Asn-842 carries an N-linked (GlcNAc...) asparagine glycan. The next 2 membrane-spanning stretches (helical) occupy residues 912–932 and 951–971; these read WVWL…SKIA and MIIW…GPVI. 3 N-linked (GlcNAc...) asparagine glycosylation sites follow: Asn-1062, Asn-1078, and Asn-1146. Residues 1220 to 1240 form a helical membrane-spanning segment; sequence ILLALSCVMVAVIGFKFLSAL. Asn-1583 carries N-linked (GlcNAc...) asparagine glycosylation. The next 3 membrane-spanning stretches (helical) occupy residues 1615-1635, 1641-1661, and 1668-1688; these read LSTI…YLIV, IPTL…MIFI, and MIAW…LLPL. Residues 1826 to 1847 are disordered; that stretch reads AHRPSLDDTSSFHQPYQPAPRP. The region spanning 1875–1930 is the DEK-C domain; the sequence is AITDSQLERSIRKICANAELDKLTKKGVRKELEREYGVELTERREAINRLVEKVLT.

This sequence in the N-terminal section; belongs to the TRAFAC class CC myosin-kinesin ATPase superfamily. Myosin family. In the C-terminal section; belongs to the chitin synthase family. Class V subfamily.

Its subcellular location is the cell membrane. The protein resides in the cell septum. It localises to the cell tip. The catalysed reaction is [(1-&gt;4)-N-acetyl-beta-D-glucosaminyl](n) + UDP-N-acetyl-alpha-D-glucosamine = [(1-&gt;4)-N-acetyl-beta-D-glucosaminyl](n+1) + UDP + H(+). Polymerizes chitin, a structural polymer of the cell wall and septum, by transferring the sugar moiety of UDP-GlcNAc to the non-reducing end of the growing chitin polymer. Produces a large proportion of the chitin that is not deacetylated to chitosan. In Cryptococcus neoformans var. grubii serotype A (strain H99 / ATCC 208821 / CBS 10515 / FGSC 9487) (Filobasidiella neoformans var. grubii), this protein is Chitin synthase 5.